A 443-amino-acid chain; its full sequence is Chromosomal replication initiator protein DnaA (443 aa).

The tract at residues 1–76 (MMDAWPRCLE…GNGEVALAVG (76 aa)) is domain I, interacts with DnaA modulators. The interval 76–105 (GSRPRAPEPAPAPVAATIAPQAAPIAPFAG) is domain II. Positions 106–323 (NLDSHYTFAN…GALNTLVARA (218 aa)) are domain III, AAA+ region. Positions 151, 153, 154, and 155 each coordinate ATP. A domain IV, binds dsDNA region spans residues 324–443 (NFTGRSITVE…WEKLIRKLSE (120 aa)).

The protein belongs to the DnaA family. In terms of assembly, oligomerizes as a right-handed, spiral filament on DNA at oriC.

Its subcellular location is the cytoplasm. Its function is as follows. Plays an essential role in the initiation and regulation of chromosomal replication. ATP-DnaA binds to the origin of replication (oriC) to initiate formation of the DNA replication initiation complex once per cell cycle. Binds the DnaA box (a 9 base pair repeat at the origin) and separates the double-stranded (ds)DNA. Forms a right-handed helical filament on oriC DNA; dsDNA binds to the exterior of the filament while single-stranded (ss)DNA is stabiized in the filament's interior. The ATP-DnaA-oriC complex binds and stabilizes one strand of the AT-rich DNA unwinding element (DUE), permitting loading of DNA polymerase. After initiation quickly degrades to an ADP-DnaA complex that is not apt for DNA replication. Binds acidic phospholipids. This chain is Chromosomal replication initiator protein DnaA, found in Xanthomonas oryzae pv. oryzae (strain KACC10331 / KXO85).